We begin with the raw amino-acid sequence, 420 residues long: Zinc finger protein Pegasus (420 aa).

K5 is covalently cross-linked (Glycyl lysine isopeptide (Lys-Gly) (interchain with G-Cter in SUMO2)). C2H2-type zinc fingers lie at residues 82-104 (LKCR…IRIH), 110-132 (HRCH…MRSH), and 138-161 (YKCE…RRKH). A Glycyl lysine isopeptide (Lys-Gly) (interchain with G-Cter in SUMO2) cross-link involves residue K185. 2 stretches are compositionally biased toward polar residues: residues 223-236 (QTDS…TTPT) and 262-273 (LSSLPPENQNPA). Disordered regions lie at residues 223 to 247 (QTDS…QELM) and 262 to 356 (LSSL…PALP). Residues 290 to 311 (QPSTQAVVSAVSASIPQSSSPT) are compositionally biased toward low complexity. A compositionally biased stretch (polar residues) spans 332–349 (SEPSAHTSTPSIGNSQPS). The C2H2-type 4; degenerate zinc finger occupies 364-387 (HHCQHCDMYFFADNILYTIHMGCH). Residues 393 to 417 (FQCNICGCKCKNKYDFACHFARGQH) form a C2H2-type 5 zinc finger.

Belongs to the Ikaros C2H2-type zinc-finger protein family. Self-associates. Interacts with other family members; IKZF1, IKZF2, IKZF3 and IKZF4.

Its subcellular location is the nucleus. Transcriptional repressor that binds the core 5'GNNTGTNG-3' DNA consensus sequence. Involved in megakaryocyte differentiation. The chain is Zinc finger protein Pegasus (IKZF5) from Pongo abelii (Sumatran orangutan).